The following is a 439-amino-acid chain: LETRLYECTECEKTFSNQSVLSLHQRTHTGEKIFKCTECEKSFMKRSQLIVHKKCHIEERPYMCTFCEKGYNQHSKLIEHIRTHTGEKPFTCTECKKSFTKRCNLTEHLRIHTGAKPHKCNLCDKTFHYPSNLVEHQRTHTGDRPFQCTECDKSFIKMSKLMVHLRIHTGEKPYKCSECDKSFSQQSTLVVHQRTHTGERPFQCSHCEKSFSYHYAFVVHERTHTGEKPYKCSMCDKAYSQRSNLKLHQKTHESKPQQDSPNCEKTFEQESAPKTATMDQLHESAGLEKVPELPEATNSVESPEAIDDYEKNYIPWSPLSEYLGVFLPPEKQHKCTECDKCFLEKSKLVVHQRTHTGERPFKCSVCDKTFIRMVHLLEHRKIHDGDRPYTCAECGKSFIRMSKLTVHRRTHTGERPYICAECGKQFSQQSNLVVHQRIH.

C2H2-type zinc fingers lie at residues 6–28 (YECT…QRTH), 34–56 (FKCT…KKCH), 62–84 (YMCT…IRTH), 90–112 (FTCT…LRIH), 118–140 (HKCN…QRTH), 146–168 (FQCT…LRIH), 174–196 (YKCS…QRTH), 202–224 (FQCS…ERTH), and 230–252 (YKCS…QKTH). Disordered regions lie at residues 246 to 275 (KLHQ…APKT) and 285 to 304 (AGLE…ESPE). 4 C2H2-type zinc fingers span residues 333-355 (HKCT…QRTH), 361-383 (FKCS…RKIH), 389-411 (YTCA…RRTH), and 417-439 (YICA…QRIH).

The protein belongs to the krueppel C2H2-type zinc-finger protein family.

The protein resides in the nucleus. In terms of biological role, may be involved in transcriptional regulation. This chain is Oocyte zinc finger protein XlCOF28, found in Xenopus laevis (African clawed frog).